The following is a 609-amino-acid chain: UvrABC system protein C (609 aa).

Positions 16–94 constitute a GIY-YIG domain; it reads SSAGVYRMYD…IKQYMPRYNV (79 aa). The UVR domain maps to 203-238; the sequence is QQVIATLVGKMEQAAMDLNYEDAARYRDQISALRRV.

This sequence belongs to the UvrC family. Interacts with UvrB in an incision complex.

Its subcellular location is the cytoplasm. The UvrABC repair system catalyzes the recognition and processing of DNA lesions. UvrC both incises the 5' and 3' sides of the lesion. The N-terminal half is responsible for the 3' incision and the C-terminal half is responsible for the 5' incision. The polypeptide is UvrABC system protein C (Shewanella loihica (strain ATCC BAA-1088 / PV-4)).